The sequence spans 490 residues: Probable glycine dehydrogenase (decarboxylating) subunit 2 (490 aa).

Position 273 is an N6-(pyridoxal phosphate)lysine (lysine 273).

This sequence belongs to the GcvP family. C-terminal subunit subfamily. The glycine cleavage system is composed of four proteins: P, T, L and H. In this organism, the P 'protein' is a heterodimer of two subunits. It depends on pyridoxal 5'-phosphate as a cofactor.

It carries out the reaction N(6)-[(R)-lipoyl]-L-lysyl-[glycine-cleavage complex H protein] + glycine + H(+) = N(6)-[(R)-S(8)-aminomethyldihydrolipoyl]-L-lysyl-[glycine-cleavage complex H protein] + CO2. The glycine cleavage system catalyzes the degradation of glycine. The P protein binds the alpha-amino group of glycine through its pyridoxal phosphate cofactor; CO(2) is released and the remaining methylamine moiety is then transferred to the lipoamide cofactor of the H protein. In Staphylococcus aureus (strain bovine RF122 / ET3-1), this protein is Probable glycine dehydrogenase (decarboxylating) subunit 2.